The following is a 268-amino-acid chain: N-formylmaleamate deformylase (268 aa).

The 224-residue stretch at 28–251 folds into the AB hydrolase-1 domain; it reads ALILVPGITS…NAGHMIPWDD (224 aa). Catalysis depends on charge relay system residues serine 101, glutamate 221, and histidine 245.

It carries out the reaction N-formylmaleamate + H2O = maleamate + formate + H(+). The protein operates within cofactor degradation; nicotinate degradation. Its function is as follows. Deformylase that catalyzes the conversion of N-formylmaleamic acid to maleamate in the aerobic nicotinate degradation pathway. The sequence is that of N-formylmaleamate deformylase (nicD) from Pseudomonas putida (strain ATCC 47054 / DSM 6125 / CFBP 8728 / NCIMB 11950 / KT2440).